The chain runs to 273 residues: Eukaryotic translation initiation factor 3 subunit G-2 (273 aa).

The interval P168 to S192 is disordered. Positions D173–W183 are enriched in gly residues. Residues S193–P271 form the RRM domain.

Belongs to the eIF-3 subunit G family. As to quaternary structure, component of the eukaryotic translation initiation factor 3 (eIF-3) complex. The eIF-3 complex interacts with pix.

The protein localises to the cytoplasm. Its function is as follows. RNA-binding component of the eukaryotic translation initiation factor 3 (eIF-3) complex, which is involved in protein synthesis of a specialized repertoire of mRNAs and, together with other initiation factors, stimulates binding of mRNA and methionyl-tRNAi to the 40S ribosome. The eIF-3 complex specifically targets and initiates translation of a subset of mRNAs involved in cell proliferation. This subunit can bind 18S rRNA. This is Eukaryotic translation initiation factor 3 subunit G-2 from Drosophila erecta (Fruit fly).